The primary structure comprises 637 residues: tRNA uridine 5-carboxymethylaminomethyl modification enzyme MnmG (637 aa).

FAD contacts are provided by residues 15-20 (GAGHAG), isoleucine 127, and serine 182. 276 to 290 (GPRYCPSIEDKIVRF) lines the NAD(+) pocket. Glutamine 373 serves as a coordination point for FAD.

The protein belongs to the MnmG family. Homodimer. Heterotetramer of two MnmE and two MnmG subunits. FAD serves as cofactor.

It localises to the cytoplasm. In terms of biological role, NAD-binding protein involved in the addition of a carboxymethylaminomethyl (cmnm) group at the wobble position (U34) of certain tRNAs, forming tRNA-cmnm(5)s(2)U34. This Streptococcus pneumoniae serotype 4 (strain ATCC BAA-334 / TIGR4) protein is tRNA uridine 5-carboxymethylaminomethyl modification enzyme MnmG.